The primary structure comprises 393 residues: Lipid-A-disaccharide synthase (393 aa).

This sequence belongs to the LpxB family.

The enzyme catalyses a lipid X + a UDP-2-N,3-O-bis[(3R)-3-hydroxyacyl]-alpha-D-glucosamine = a lipid A disaccharide + UDP + H(+). The protein operates within bacterial outer membrane biogenesis; LPS lipid A biosynthesis. Functionally, condensation of UDP-2,3-diacylglucosamine and 2,3-diacylglucosamine-1-phosphate to form lipid A disaccharide, a precursor of lipid A, a phosphorylated glycolipid that anchors the lipopolysaccharide to the outer membrane of the cell. The polypeptide is Lipid-A-disaccharide synthase (Actinobacillus pleuropneumoniae serotype 3 (strain JL03)).